The following is a 73-amino-acid chain: uncharacterized protein (73 aa).

The interval 1–32 is disordered; sequence MFLSSAVRKDSNGVRHLPSVQRWTPGSPPTRA.

This is an uncharacterized protein from Frog virus 3 (isolate Goorha) (FV-3).